The following is a 206-amino-acid chain: Ribosomal RNA large subunit methyltransferase E (206 aa).

S-adenosyl-L-methionine-binding residues include Gly60, Trp62, Asp80, Asp96, and Asp121. Lys161 functions as the Proton acceptor in the catalytic mechanism.

This sequence belongs to the class I-like SAM-binding methyltransferase superfamily. RNA methyltransferase RlmE family.

Its subcellular location is the cytoplasm. It carries out the reaction uridine(2552) in 23S rRNA + S-adenosyl-L-methionine = 2'-O-methyluridine(2552) in 23S rRNA + S-adenosyl-L-homocysteine + H(+). In terms of biological role, specifically methylates the uridine in position 2552 of 23S rRNA at the 2'-O position of the ribose in the fully assembled 50S ribosomal subunit. The chain is Ribosomal RNA large subunit methyltransferase E from Francisella tularensis subsp. holarctica (strain FTNF002-00 / FTA).